The following is a 348-amino-acid chain: uncharacterized protein (348 aa).

The disordered stretch occupies residues S132 to L348. Over residues S161–R178 the composition is skewed to low complexity. Polar residues predominate over residues S192 to P207. A compositionally biased stretch (low complexity) spans A227 to P273. Residues A274–R287 show a composition bias toward pro residues. Low complexity predominate over residues T288–R310.

This is an uncharacterized protein from Streptomyces fradiae (Streptomyces roseoflavus).